Here is a 1389-residue protein sequence, read N- to C-terminus: Superkiller protein 3 (1389 aa).

3 TPR repeats span residues 2–35 (AKPALKAAKEALVVKNYELAIEQSKKALSFDANN), 36–69 (YNANVFLGVAYFSTKQLSESKEAYLDAIKIDEKA), and 90–123 (HKITPILASKFLELEEQNKCLNTVNKYMEVVKKY). The interval 326-355 (SNNSAELAKETKEEDDSENSVDKKENEEDI) is disordered. TPR repeat units lie at residues 381–414 (TIISECLAKYYIHLKEYEYAIGLSKAALEVLKRL), 429–463 (FQLCLAIGYSHYEVPRYLFQAMHYYDILLAADPRN), 465–497 (HALLGKGLVQIENEQYSDAVKTLGLLLDDHEND), 498–530 (PSLSELSWCYFKTGNLPKAISTVEKCLDVLLSM), 538–574 (AEAYYRYGIYILNRKSENYLEDSFSAFVSSLRKDPNY), 575–608 (APAYTSLGLYYRDIHDMVRATKCFQKAFELDASQ), 650–683 (NWHHTSLGVLELNAKNFHKAIVHFQSALRISPKD), 684–717 (TNAWSGLGEAYARSGRYVSALKAFNRASILDPDD), 719–751 (YVKYFIATLEKDMGEYEVAVSTLSEILAVRSKE), 759–792 (AETYVRLAKLYHARGFYSRAADSLEKSIQICCNV), 931–963 (VFWNMLGVLFSQTKAVRSAQHCYIQSLLLNERS), 964–997 (SGVWANYGALCIQNHDVECANAAFTRSISIDPDN), 999–1031 (QAWLGKAYCSIAVGSIRKAVQIIHHAFEISSGK), 1124–1157 (IDAKALLGRLYLAKKSFENSVEQAGIALDLLEGE), and 1167–1200 (LGLNLTCGTASFFLNKLEKSLDCFEKALLVSDSN).

In terms of assembly, component of the SKI complex composed of at least ski2, ski3 and ski8. The SKI complex interacts with ski7, which makes the link between the SKI complex and the exosome in order to perform mRNA degradation.

The protein resides in the cytoplasm. Functionally, component of the SKI complex involved in 3'-mRNA degradation pathway. This is Superkiller protein 3 (ski3) from Schizosaccharomyces pombe (strain 972 / ATCC 24843) (Fission yeast).